The primary structure comprises 259 residues: Bacillaene synthase dehydratase PksH (259 aa).

Catalysis depends on residues aspartate 68 and glutamate 137.

Belongs to the enoyl-CoA hydratase/isomerase family.

The protein localises to the cytoplasm. Its pathway is antibiotic biosynthesis; bacillaene biosynthesis. Its function is as follows. Involved in some intermediate steps for the synthesis of the antibiotic polyketide bacillaene which is involved in secondary metabolism. Catalyzes the dehydration of the (S)-3-hydroxy-3-methylglutaryl group tethered to PksL to a 3-methylglutaconyl moiety. This is Bacillaene synthase dehydratase PksH (pksH) from Bacillus subtilis (strain 168).